Reading from the N-terminus, the 101-residue chain is Large ribosomal subunit protein uL23c (101 aa).

This sequence belongs to the universal ribosomal protein uL23 family. In terms of assembly, part of the 50S ribosomal subunit.

It localises to the plastid. It is found in the chloroplast. Functionally, binds to 23S rRNA. The polypeptide is Large ribosomal subunit protein uL23c (rpl23) (Cyanidium caldarium (Red alga)).